A 247-amino-acid chain; its full sequence is Uroporphyrinogen-III C-methyltransferase (247 aa).

S-adenosyl-L-homocysteine-binding positions include Pro12, Thr117 to Ala118, Met168, Ala197, and Ala225.

This sequence belongs to the precorrin methyltransferase family.

The catalysed reaction is uroporphyrinogen III + 2 S-adenosyl-L-methionine = precorrin-2 + 2 S-adenosyl-L-homocysteine + H(+). The protein operates within cofactor biosynthesis; adenosylcobalamin biosynthesis; precorrin-2 from uroporphyrinogen III: step 1/1. Its pathway is porphyrin-containing compound metabolism; siroheme biosynthesis; precorrin-2 from uroporphyrinogen III: step 1/1. In terms of biological role, catalyzes the two successive C-2 and C-7 methylation reactions involved in the conversion of uroporphyrinogen III to precorrin-2 via the intermediate formation of precorrin-1. It is a step in the biosynthesis of both cobalamin (vitamin B12) and siroheme. In Pseudomonas fluorescens, this protein is Uroporphyrinogen-III C-methyltransferase.